The primary structure comprises 275 residues: Vitamin B12-binding protein (275 aa).

Positions 1-19 (MMNKLCFALPLIFSDASFA) are cleaved as a signal peptide. The 248-residue stretch at 25-272 (RIISLAPHST…EVCEHFETVR (248 aa)) folds into the Fe/B12 periplasmic-binding domain. The cysteines at positions 185 and 265 are disulfide-linked.

Belongs to the BtuF family. As to quaternary structure, the complex is composed of two ATP-binding proteins (BtuD), two transmembrane proteins (BtuC) and a solute-binding protein (BtuF).

It localises to the periplasm. Its function is as follows. Part of the ABC transporter complex BtuCDF involved in vitamin B12 import. Binds vitamin B12 and delivers it to the periplasmic surface of BtuC. This is Vitamin B12-binding protein from Vibrio campbellii (strain ATCC BAA-1116).